We begin with the raw amino-acid sequence, 247 residues long: Adenylate kinase (247 aa).

Residue 42–47 (GAGKGT) coordinates ATP. An NMP region spans residues 62-91 (ATGDMLRAQVTAKTELGVQAKKIMDQGGLV). Residues Thr-63, Arg-68, 89–91 (GLV), 118–121 (GFPR), and Gln-125 contribute to the AMP site. Residues 159–196 (GRLVHPASGRSYHKLFNPPKKEMTDDQTGEPLVQRSDD) form an LID region. ATP contacts are provided by residues Arg-160 and 169–170 (SY). The segment at 169–191 (SYHKLFNPPKKEMTDDQTGEPLV) is disordered. Residues Arg-193 and Arg-204 each contribute to the AMP site. Gln-232 serves as a coordination point for ATP.

The protein belongs to the adenylate kinase family. AK2 subfamily. In terms of assembly, monomer.

The protein resides in the cytoplasm. It is found in the cytosol. Its subcellular location is the mitochondrion intermembrane space. The catalysed reaction is AMP + ATP = 2 ADP. Its function is as follows. Catalyzes the reversible transfer of the terminal phosphate group between ATP and AMP. Plays an important role in cellular energy homeostasis and in adenine nucleotide metabolism. Adenylate kinase activity is critical for regulation of the phosphate utilization and the AMP de novo biosynthesis pathways. This chain is Adenylate kinase, found in Meyerozyma guilliermondii (strain ATCC 6260 / CBS 566 / DSM 6381 / JCM 1539 / NBRC 10279 / NRRL Y-324) (Yeast).